The sequence spans 129 residues: Protein Turandot A (129 aa).

An N-terminal signal peptide occupies residues 1-21; it reads MNSSTALMCFALLLISPLCMG. N-linked (GlcNAc...) asparagine glycosylation is present at Asn-49.

The protein belongs to the Turandot family. Expressed in the fat body (at protein level).

It is found in the secreted. In terms of biological role, a humoral factor that plays a role in stress tolerance; gives increased resistance to the lethal effects of bacterial challenge and stress. Regulated by the JAK/STAT pathway and NF-KB-like Relish pathway in the fat body, upd3 in the hemocytes and Mekk1 in response to septic injury and consequent immune response. This Drosophila melanogaster (Fruit fly) protein is Protein Turandot A.